We begin with the raw amino-acid sequence, 523 residues long: Mitochondrial distribution and morphology protein 34 (523 aa).

Positions M1–L200 constitute an SMP-LTD domain. Residues E489–H523 are disordered.

Belongs to the MDM34 family. As to quaternary structure, component of the ER-mitochondria encounter structure (ERMES) or MDM complex, composed of MMM1, MDM10, MDM12 and MDM34.

It localises to the mitochondrion outer membrane. In terms of biological role, component of the ERMES/MDM complex, which serves as a molecular tether to connect the endoplasmic reticulum (ER) and mitochondria. Components of this complex are involved in the control of mitochondrial shape and protein biogenesis, and function in nonvesicular lipid trafficking between the ER and mitochondria. MDM34 is required for the interaction of the ER-resident membrane protein MMM1 and the outer mitochondrial membrane-resident beta-barrel protein MDM10. The polypeptide is Mitochondrial distribution and morphology protein 34 (Scheffersomyces stipitis (strain ATCC 58785 / CBS 6054 / NBRC 10063 / NRRL Y-11545) (Yeast)).